Consider the following 155-residue polypeptide: Large ribosomal subunit protein bL17 (155 aa).

The protein belongs to the bacterial ribosomal protein bL17 family. In terms of assembly, part of the 50S ribosomal subunit. Contacts protein L32.

The sequence is that of Large ribosomal subunit protein bL17 from Syntrophotalea carbinolica (strain DSM 2380 / NBRC 103641 / GraBd1) (Pelobacter carbinolicus).